The primary structure comprises 433 residues: Gamma-glutamyl phosphate reductase 1 (433 aa).

It belongs to the gamma-glutamyl phosphate reductase family.

The protein resides in the cytoplasm. It catalyses the reaction L-glutamate 5-semialdehyde + phosphate + NADP(+) = L-glutamyl 5-phosphate + NADPH + H(+). It functions in the pathway amino-acid biosynthesis; L-proline biosynthesis; L-glutamate 5-semialdehyde from L-glutamate: step 2/2. Catalyzes the NADPH-dependent reduction of L-glutamate 5-phosphate into L-glutamate 5-semialdehyde and phosphate. The product spontaneously undergoes cyclization to form 1-pyrroline-5-carboxylate. The chain is Gamma-glutamyl phosphate reductase 1 from Synechocystis sp. (strain ATCC 27184 / PCC 6803 / Kazusa).